Reading from the N-terminus, the 51-residue chain is Large ribosomal subunit protein bL33 (51 aa).

Belongs to the bacterial ribosomal protein bL33 family.

This Pseudomonas putida (strain ATCC 47054 / DSM 6125 / CFBP 8728 / NCIMB 11950 / KT2440) protein is Large ribosomal subunit protein bL33.